A 118-amino-acid chain; its full sequence is Large ribosomal subunit protein bL20 (118 aa).

The protein belongs to the bacterial ribosomal protein bL20 family.

In terms of biological role, binds directly to 23S ribosomal RNA and is necessary for the in vitro assembly process of the 50S ribosomal subunit. It is not involved in the protein synthesizing functions of that subunit. The sequence is that of Large ribosomal subunit protein bL20 from Thermosipho africanus (strain TCF52B).